The primary structure comprises 123 residues: Probable prefoldin subunit 4 (123 aa).

It belongs to the prefoldin subunit beta family. In terms of assembly, heterohexamer of two PFD-alpha type and four PFD-beta type subunits.

In terms of biological role, binds specifically to cytosolic chaperonin (c-CPN) and transfers target proteins to it. Binds to nascent polypeptide chain and promotes folding in an environment in which there are many competing pathways for nonnative proteins. The protein is Probable prefoldin subunit 4 of Schizosaccharomyces pombe (strain 972 / ATCC 24843) (Fission yeast).